The primary structure comprises 197 residues: Probable GTP-binding protein EngB (197 aa).

Positions Thr22–Gln197 constitute an EngB-type G domain. Residues Gly30–Ser37, Gly57–Leu61, Asp75–Gly78, Thr142–Asp145, and Phe177–Ser179 contribute to the GTP site. Mg(2+) contacts are provided by Ser37 and Thr59.

Belongs to the TRAFAC class TrmE-Era-EngA-EngB-Septin-like GTPase superfamily. EngB GTPase family. Mg(2+) serves as cofactor.

Necessary for normal cell division and for the maintenance of normal septation. The chain is Probable GTP-binding protein EngB from Francisella philomiragia subsp. philomiragia (strain ATCC 25017 / CCUG 19701 / FSC 153 / O#319-036).